A 166-amino-acid chain; its full sequence is PTS system glucose-specific EIIA component (166 aa).

Residues 34–138 (DPVFAQKMMG…SVISPIIITN (105 aa)) enclose the PTS EIIA type-1 domain. Residues His-71 and His-86 each coordinate Zn(2+). Residue His-86 is the Tele-phosphohistidine intermediate; for EIIA activity of the active site. Phosphohistidine; by HPr is present on His-86.

As to quaternary structure, heterodimer with glycerol kinase (glpk). It depends on Zn(2+) as a cofactor.

It localises to the cytoplasm. The phosphoenolpyruvate-dependent sugar phosphotransferase system (sugar PTS), a major carbohydrate active transport system, catalyzes the phosphorylation of incoming sugar substrates concomitantly with their translocation across the cell membrane. The enzyme II complex composed of PtsG and Crr is involved in glucose transport. The chain is PTS system glucose-specific EIIA component (crr) from Staphylococcus aureus (strain MRSA252).